Here is a 118-residue protein sequence, read N- to C-terminus: Large ribosomal subunit protein bL20 (118 aa).

This sequence belongs to the bacterial ribosomal protein bL20 family.

Functionally, binds directly to 23S ribosomal RNA and is necessary for the in vitro assembly process of the 50S ribosomal subunit. It is not involved in the protein synthesizing functions of that subunit. The chain is Large ribosomal subunit protein bL20 from Tolumonas auensis (strain DSM 9187 / NBRC 110442 / TA 4).